Reading from the N-terminus, the 256-residue chain is 5-keto-4-deoxy-D-glucarate aldolase (256 aa).

The active-site Proton acceptor is the H50. Q151 serves as a coordination point for substrate. A Mg(2+)-binding site is contributed by E153. S178 and D179 together coordinate substrate. D179 is a binding site for Mg(2+).

This sequence belongs to the HpcH/HpaI aldolase family. KDGluc aldolase subfamily. As to quaternary structure, homohexamer; trimer of dimers. Mg(2+) serves as cofactor.

It catalyses the reaction 5-dehydro-4-deoxy-D-glucarate = 2-hydroxy-3-oxopropanoate + pyruvate. The enzyme catalyses 2-dehydro-3-deoxy-D-glucarate = 2-hydroxy-3-oxopropanoate + pyruvate. It participates in carbohydrate acid metabolism; galactarate degradation; D-glycerate from galactarate: step 2/3. Functionally, catalyzes the reversible retro-aldol cleavage of both 5-keto-4-deoxy-D-glucarate and 2-keto-3-deoxy-D-glucarate to pyruvate and tartronic semialdehyde. This Shigella boydii serotype 4 (strain Sb227) protein is 5-keto-4-deoxy-D-glucarate aldolase.